The primary structure comprises 276 residues: Formamidopyrimidine-DNA glycosylase (276 aa).

The active-site Schiff-base intermediate with DNA is the Pro-2. The Proton donor role is filled by Glu-3. Lys-58 (proton donor; for beta-elimination activity) is an active-site residue. The DNA site is built by His-94, Arg-112, and Arg-157. The FPG-type zinc-finger motif lies at 242 to 276 (FVYDRAGQPCRVCGTPIKQIVQGQRSTYYCPTCQR). Arg-266 (proton donor; for delta-elimination activity) is an active-site residue.

Belongs to the FPG family. Monomer. Zn(2+) serves as cofactor.

The enzyme catalyses Hydrolysis of DNA containing ring-opened 7-methylguanine residues, releasing 2,6-diamino-4-hydroxy-5-(N-methyl)formamidopyrimidine.. It catalyses the reaction 2'-deoxyribonucleotide-(2'-deoxyribose 5'-phosphate)-2'-deoxyribonucleotide-DNA = a 3'-end 2'-deoxyribonucleotide-(2,3-dehydro-2,3-deoxyribose 5'-phosphate)-DNA + a 5'-end 5'-phospho-2'-deoxyribonucleoside-DNA + H(+). Its function is as follows. Involved in base excision repair of DNA damaged by oxidation or by mutagenic agents. Acts as a DNA glycosylase that recognizes and removes damaged bases. Has a preference for oxidized purines, such as 7,8-dihydro-8-oxoguanine (8-oxoG). Has AP (apurinic/apyrimidinic) lyase activity and introduces nicks in the DNA strand. Cleaves the DNA backbone by beta-delta elimination to generate a single-strand break at the site of the removed base with both 3'- and 5'-phosphates. This chain is Formamidopyrimidine-DNA glycosylase, found in Paraburkholderia phymatum (strain DSM 17167 / CIP 108236 / LMG 21445 / STM815) (Burkholderia phymatum).